Here is a 276-residue protein sequence, read N- to C-terminus: NADPH-dependent 7-cyano-7-deazaguanine reductase (276 aa).

83–85 (IES) is a substrate binding site. 85–86 (SK) is an NADPH binding site. Cys-184 (thioimide intermediate) is an active-site residue. Catalysis depends on Asp-191, which acts as the Proton donor. Substrate is bound at residue 223–224 (HE). 252–253 (RG) contributes to the NADPH binding site.

This sequence belongs to the GTP cyclohydrolase I family. QueF type 2 subfamily. As to quaternary structure, homodimer.

The protein localises to the cytoplasm. The enzyme catalyses 7-aminomethyl-7-carbaguanine + 2 NADP(+) = 7-cyano-7-deazaguanine + 2 NADPH + 3 H(+). The protein operates within tRNA modification; tRNA-queuosine biosynthesis. Functionally, catalyzes the NADPH-dependent reduction of 7-cyano-7-deazaguanine (preQ0) to 7-aminomethyl-7-deazaguanine (preQ1). The chain is NADPH-dependent 7-cyano-7-deazaguanine reductase from Pseudomonas fluorescens (strain SBW25).